Consider the following 329-residue polypeptide: GTP 3',8-cyclase (329 aa).

The Radical SAM core domain maps to 1-229; the sequence is MNQIDYLRIS…EGQVRGNGPA (229 aa). Residue arginine 8 participates in GTP binding. 2 residues coordinate [4Fe-4S] cluster: cysteine 15 and cysteine 19. Tyrosine 21 contacts S-adenosyl-L-methionine. [4Fe-4S] cluster is bound at residue cysteine 22. Residue arginine 60 coordinates GTP. Glycine 64 contacts S-adenosyl-L-methionine. A GTP-binding site is contributed by threonine 91. Serine 115 is a binding site for S-adenosyl-L-methionine. Lysine 155 provides a ligand contact to GTP. Residue methionine 189 coordinates S-adenosyl-L-methionine. [4Fe-4S] cluster-binding residues include cysteine 252 and cysteine 255. Residue 257–259 participates in GTP binding; that stretch reads RLR. Cysteine 269 provides a ligand contact to [4Fe-4S] cluster.

This sequence belongs to the radical SAM superfamily. MoaA family. In terms of assembly, monomer and homodimer. Requires [4Fe-4S] cluster as cofactor.

It catalyses the reaction GTP + AH2 + S-adenosyl-L-methionine = (8S)-3',8-cyclo-7,8-dihydroguanosine 5'-triphosphate + 5'-deoxyadenosine + L-methionine + A + H(+). The protein operates within cofactor biosynthesis; molybdopterin biosynthesis. Its function is as follows. Catalyzes the cyclization of GTP to (8S)-3',8-cyclo-7,8-dihydroguanosine 5'-triphosphate. The chain is GTP 3',8-cyclase from Microcystis aeruginosa (strain NIES-843 / IAM M-2473).